A 46-amino-acid polypeptide reads, in one-letter code: Sperm protamine P1 (46 aa).

It belongs to the protamine P1 family. Testis.

It is found in the nucleus. It localises to the chromosome. Protamines substitute for histones in the chromatin of sperm during the haploid phase of spermatogenesis. They compact sperm DNA into a highly condensed, stable and inactive complex. The protein is Sperm protamine P1 (PRM1) of Glauconycteris beatrix (Beatrix's bat).